Here is a 241-residue protein sequence, read N- to C-terminus: Pyridoxine/pyridoxamine 5'-phosphate oxidase (241 aa).

A disordered region spans residues Met-1–Tyr-35. Residues Arg-32–Tyr-35 and Lys-92 contribute to the substrate site. FMN contacts are provided by residues Arg-87–Lys-92, Tyr-102–Thr-103, Arg-108, Lys-109, and Gln-131. Residues Tyr-149, Arg-153, and Ser-157 each coordinate substrate. Residues Gln-166 to Ser-167 and Trp-212 each bind FMN. Substrate is bound at residue Arg-218–His-220. Position 222 (Arg-222) interacts with FMN.

It belongs to the pyridoxamine 5'-phosphate oxidase family. As to quaternary structure, homodimer. FMN is required as a cofactor.

It catalyses the reaction pyridoxamine 5'-phosphate + O2 + H2O = pyridoxal 5'-phosphate + H2O2 + NH4(+). The enzyme catalyses pyridoxine 5'-phosphate + O2 = pyridoxal 5'-phosphate + H2O2. The protein operates within cofactor metabolism; pyridoxal 5'-phosphate salvage; pyridoxal 5'-phosphate from pyridoxamine 5'-phosphate: step 1/1. It participates in cofactor metabolism; pyridoxal 5'-phosphate salvage; pyridoxal 5'-phosphate from pyridoxine 5'-phosphate: step 1/1. In terms of biological role, catalyzes the oxidation of either pyridoxine 5'-phosphate (PNP) or pyridoxamine 5'-phosphate (PMP) into pyridoxal 5'-phosphate (PLP). The polypeptide is Pyridoxine/pyridoxamine 5'-phosphate oxidase (Frankia alni (strain DSM 45986 / CECT 9034 / ACN14a)).